Consider the following 102-residue polypeptide: Small ribosomal subunit protein uS10 (102 aa).

This sequence belongs to the universal ribosomal protein uS10 family. Part of the 30S ribosomal subunit.

Involved in the binding of tRNA to the ribosomes. The protein is Small ribosomal subunit protein uS10 of Rhodopseudomonas palustris (strain BisB18).